Reading from the N-terminus, the 1266-residue chain is Neuronal-glial cell adhesion molecule (1266 aa).

Positions 1–20 (MALPMVGLLLLLLLGGPGAA) are cleaved as a signal peptide. Residues 21 to 1130 (ITIPPEYGAH…PQPGGGVCTK (1110 aa)) are Extracellular-facing. 6 Ig-like C2-type domains span residues 36–128 (PELT…NVIA), 135–221 (PKEK…KEPL), 236–322 (PRLL…HSVT), 327–413 (PYWV…AFLH), 418–506 (PLRM…ALLE), and 510–597 (PTRI…AQLR). 4 cysteine pairs are disulfide-bonded: cysteine 58-cysteine 110, cysteine 154-cysteine 205, cysteine 260-cysteine 306, and cysteine 348-cysteine 397. Residue asparagine 97 is glycosylated (N-linked (GlcNAc...) asparagine). N-linked (GlcNAc...) asparagine glycosylation is found at asparagine 288, asparagine 390, asparagine 434, asparagine 472, and asparagine 498. A disulfide bond links cysteine 441 and cysteine 490. A disulfide bond links cysteine 532 and cysteine 581. 5 consecutive Fibronectin type-III domains span residues 603–698 (PSRD…TPPA), 700–804 (PERN…SGED), 809–930 (YPEN…TPEG), 934–1021 (PPEE…TKPE), and 1022–1118 (PPSP…TNGT). The interval 685–710 (EHHAPSAPIETPPAAPERNPGGVHGE) is disordered. 2 N-linked (GlcNAc...) asparagine glycosylation sites follow: asparagine 712 and asparagine 819. Positions 857–882 (SRRQAPPDPPQIPQSPAEDPPPFPPV) are disordered. Pro residues predominate over residues 862–881 (PPDPPQIPQSPAEDPPPFPP). A Cell attachment site motif is present at residues 914-916 (RGD). Positions 1004 to 1025 (STPRERPALQTVGSTKPEPPSP) are disordered. Residues asparagine 1061, asparagine 1075, asparagine 1100, and asparagine 1116 are each glycosylated (N-linked (GlcNAc...) asparagine). Residues 1131-1153 (GWFIGFVSSVVLLLLILLILCFI) form a helical membrane-spanning segment. Topologically, residues 1154–1266 (KRSKGGKYSV…ASPCAGPPLD (113 aa)) are cytoplasmic. Residues 1163–1195 (VKDKEDTQVDSEARPMKDETFGEYRSLESEAEK) show a composition bias toward basic and acidic residues. The disordered stretch occupies residues 1163 to 1266 (VKDKEDTQVD…ASPCAGPPLD (104 aa)). Residues 1199–1211 (SGSGAGSGVGSPG) show a composition bias toward gly residues.

Belongs to the immunoglobulin superfamily. L1/neurofascin/NgCAM family. In terms of assembly, binds to itself and to axonin 1. As to expression, brain.

Its subcellular location is the cell membrane. Functionally, mediates the adhesion of neurons to neurons and neurons to glia. It is involved in neuronal migration, neurite fasciculation and outgrowth. This is Neuronal-glial cell adhesion molecule from Gallus gallus (Chicken).